Here is an 832-residue protein sequence, read N- to C-terminus: Alpha-glucan phosphorylase, H isozyme (832 aa).

Residue lysine 678 is modified to N6-(pyridoxal phosphate)lysine.

Belongs to the glycogen phosphorylase family. The cofactor is pyridoxal 5'-phosphate.

The protein resides in the cytoplasm. The catalysed reaction is [(1-&gt;4)-alpha-D-glucosyl](n) + phosphate = [(1-&gt;4)-alpha-D-glucosyl](n-1) + alpha-D-glucose 1-phosphate. Phosphorylase is an important allosteric enzyme in carbohydrate metabolism. Enzymes from different sources differ in their regulatory mechanisms and in their natural substrates. However, all known phosphorylases share catalytic and structural properties. The protein is Alpha-glucan phosphorylase, H isozyme of Triticum aestivum (Wheat).